The primary structure comprises 212 residues: Casparian strip membrane protein 1 (212 aa).

The tract at residues 1–28 (MDSSNSTKETGDIPIPVTSSKSSKAAPP) is disordered. The Cytoplasmic segment spans residues 1–49 (MDSSNSTKETGDIPIPVTSSKSSKAAPPPVVAAKAKSTTKQPLVSGWKR). The span at 16-28 (PVTSSKSSKAAPP) shows a compositional bias: low complexity. A helical membrane pass occupies residues 50–70 (GLGIIDFILRICAIAAALAAA). The Extracellular portion of the chain corresponds to 71–100 (TAMGTTSQQLPFFTQFFQFKADYNDLPAFT). The chain crosses the membrane as a helical span at residues 101–121 (FFVIANAMAGAYLVLSLPFSI). Residues 122-133 (LCIVRPHILGAR) are Cytoplasmic-facing. The chain crosses the membrane as a helical span at residues 134–154 (LMLLVFDTVAVPLVTAAASAA). The Extracellular portion of the chain corresponds to 155–186 (ASIVYLAHNGNSDANWVAICRQFNDFCQRVSG). The chain crosses the membrane as a helical span at residues 187–207 (AVVASFITALLFVVLVAVSAV). At 208–212 (ALRQK) the chain is on the cytoplasmic side.

It belongs to the Casparian strip membrane proteins (CASP) family. Homodimer and heterodimers.

The protein resides in the cell membrane. Its function is as follows. Regulates membrane-cell wall junctions and localized cell wall deposition. Required for establishment of the Casparian strip membrane domain (CSD) and the subsequent formation of Casparian strips, a cell wall modification of the root endodermis that determines an apoplastic barrier between the intraorganismal apoplasm and the extraorganismal apoplasm and prevents lateral diffusion. The protein is Casparian strip membrane protein 1 of Helianthus annuus (Common sunflower).